A 425-amino-acid polypeptide reads, in one-letter code: Raffinose permease (425 aa).

Topologically, residues 1–11 (MNSASTHKNTD) are cytoplasmic. A helical membrane pass occupies residues 12–32 (FWIFGLFFFLYFFIMATCFPF). Topologically, residues 33–48 (LPVWLSDVVGLSKTDT) are periplasmic. The chain crosses the membrane as a helical span at residues 49 to 69 (GIVFSCLSLFAISFQPLLGVI). Topologically, residues 70–78 (SDRLGLKKN) are cytoplasmic. Residues 79-99 (LIWSISLLLVFFAPFFLYVFA) traverse the membrane as a helical segment. At 100–105 (PLLHLN) the chain is on the periplasmic side. The chain crosses the membrane as a helical span at residues 106–126 (IWAGALTGGVFIGFVFSAGAG). Residues 127–147 (AIEAYIERVSRSSGFEYGKAR) are Cytoplasmic-facing. A helical membrane pass occupies residues 148–168 (MFGCLGWALCATMAGILFNVD). Residue Pro-169 is a topological domain, periplasmic. A helical membrane pass occupies residues 170–190 (SLVFWMGSGGALLLLLLLYLA). At 191–229 (RPSTSQTAMVMNALGANSSLISTRMVFSLFRMRQMWMFV) the chain is on the cytoplasmic side. A helical transmembrane segment spans residues 230–250 (LYTIGVACVYDVFDQQFAIFF). The Periplasmic portion of the chain corresponds to 251–265 (RSFFDTPQAGIKAFG). A helical membrane pass occupies residues 266 to 286 (FATTAGEICNAIIMFCTPWII). The Cytoplasmic segment spans residues 287–294 (NRIGAKNT). The helical transmembrane segment at 295 to 315 (LLVAGGIMTIRITGSAFATTM) threads the bilayer. Position 316 (Thr-316) is a topological domain, periplasmic. Residues 317-337 (EVVILKMLHALEVPFLLVGAF) traverse the membrane as a helical segment. Topologically, residues 338 to 351 (KYITGVFDTRLSAT) are cytoplasmic. Residues 352 to 372 (VYLIGFQFSKQLAAILLSTFA) traverse the membrane as a helical segment. Topologically, residues 373–383 (GHLYDRMGFQN) are periplasmic. The helical transmembrane segment at 384-404 (TYFVLGMIVLTVTVISAFTLS) threads the bilayer. Residues 405-425 (SSPGIVHPSVEKAPVAHSEIN) are Cytoplasmic-facing.

This sequence belongs to the major facilitator superfamily. Oligosaccharide:H(+) symporter (OHS) (TC 2.A.1.5) family. As to quaternary structure, monomer.

It localises to the cell inner membrane. Functionally, responsible for transport of raffinose into the cell. Can also transport lactose and melibiose. Has weak activity with maltose. This is Raffinose permease from Escherichia coli.